The sequence spans 160 residues: S-ribosylhomocysteine lyase (160 aa).

Fe cation is bound by residues His-57, His-61, and Cys-127.

This sequence belongs to the LuxS family. Homodimer. The cofactor is Fe cation.

It carries out the reaction S-(5-deoxy-D-ribos-5-yl)-L-homocysteine = (S)-4,5-dihydroxypentane-2,3-dione + L-homocysteine. In terms of biological role, involved in the synthesis of autoinducer 2 (AI-2) which is secreted by bacteria and is used to communicate both the cell density and the metabolic potential of the environment. The regulation of gene expression in response to changes in cell density is called quorum sensing. Catalyzes the transformation of S-ribosylhomocysteine (RHC) to homocysteine (HC) and 4,5-dihydroxy-2,3-pentadione (DPD). In Streptococcus agalactiae serotype V (strain ATCC BAA-611 / 2603 V/R), this protein is S-ribosylhomocysteine lyase.